Reading from the N-terminus, the 159-residue chain is Small ribosomal subunit protein uS9 (159 aa).

It belongs to the universal ribosomal protein uS9 family.

The chain is Small ribosomal subunit protein uS9 from Rickettsia conorii (strain ATCC VR-613 / Malish 7).